The primary structure comprises 168 residues: I-Kappa-B like protein G2 (168 aa).

ANK repeat units follow at residues 56-88 (SQRQ…DING) and 93-123 (GGNT…NKTA).

The protein belongs to the polydnaviridae I-Kappa-B-like protein family.

Its function is as follows. Suppresses the host immune response through NF-kappa-B inactivation. Possesses ankyrin repeat domains required for NF-kappa-B binding but lacks the regulatory regions required for dissociation from NF-kappa-B and degradation. Therefore, prevents host NF-kappa-B release and subsequent activation. The protein is I-Kappa-B like protein G2 (G4) of Microplitis demolitor (Parasitoid wasp).